A 148-amino-acid polypeptide reads, in one-letter code: UPF0178 protein DP1304 (148 aa).

Belongs to the UPF0178 family.

The protein is UPF0178 protein DP1304 of Desulfotalea psychrophila (strain LSv54 / DSM 12343).